The chain runs to 555 residues: Potassium-transporting ATPase potassium-binding subunit (555 aa).

10 consecutive transmembrane segments (helical) span residues 2 to 22 (IWVA…PTGI), 60 to 80 (QYAL…YFVF), 130 to 150 (IGIT…VMAF), 173 to 193 (VFLP…VPQT), 246 to 266 (MSNI…PFTY), 278 to 298 (ILFV…TTSE), 374 to 394 (AGFV…GLMV), 412 to 432 (LIAV…ALAL), 483 to 503 (LVMF…AASL), and 525 to 545 (GIFI…MLVL).

This sequence belongs to the KdpA family. The system is composed of three essential subunits: KdpA, KdpB and KdpC.

Its subcellular location is the cell membrane. Its function is as follows. Part of the high-affinity ATP-driven potassium transport (or Kdp) system, which catalyzes the hydrolysis of ATP coupled with the electrogenic transport of potassium into the cytoplasm. This subunit binds the extracellular potassium ions and delivers the ions to the membrane domain of KdpB through an intramembrane tunnel. The chain is Potassium-transporting ATPase potassium-binding subunit from Bacillus cereus (strain ATCC 10987 / NRS 248).